The following is a 458-amino-acid chain: tRNA(Ile)-lysidine synthase (458 aa).

35–40 contributes to the ATP binding site; the sequence is SGGVDS.

The protein belongs to the tRNA(Ile)-lysidine synthase family.

The protein resides in the cytoplasm. The catalysed reaction is cytidine(34) in tRNA(Ile2) + L-lysine + ATP = lysidine(34) in tRNA(Ile2) + AMP + diphosphate + H(+). Its function is as follows. Ligates lysine onto the cytidine present at position 34 of the AUA codon-specific tRNA(Ile) that contains the anticodon CAU, in an ATP-dependent manner. Cytidine is converted to lysidine, thus changing the amino acid specificity of the tRNA from methionine to isoleucine. In Nitrosomonas europaea (strain ATCC 19718 / CIP 103999 / KCTC 2705 / NBRC 14298), this protein is tRNA(Ile)-lysidine synthase.